The sequence spans 76 residues: Small ribosomal subunit protein bS18 (76 aa).

Belongs to the bacterial ribosomal protein bS18 family. In terms of assembly, part of the 30S ribosomal subunit. Forms a tight heterodimer with protein bS6.

In terms of biological role, binds as a heterodimer with protein bS6 to the central domain of the 16S rRNA, where it helps stabilize the platform of the 30S subunit. This Carboxydothermus hydrogenoformans (strain ATCC BAA-161 / DSM 6008 / Z-2901) protein is Small ribosomal subunit protein bS18.